Consider the following 785-residue polypeptide: Endonuclease MutS2 (785 aa).

An ATP-binding site is contributed by 335-342 (GPNTGGKT). Positions 710–785 (LDLRGERYED…GNGVTIVEFK (76 aa)) constitute a Smr domain.

This sequence belongs to the DNA mismatch repair MutS family. MutS2 subfamily. Homodimer. Binds to stalled ribosomes, contacting rRNA.

Functionally, endonuclease that is involved in the suppression of homologous recombination and thus may have a key role in the control of bacterial genetic diversity. In terms of biological role, acts as a ribosome collision sensor, splitting the ribosome into its 2 subunits. Detects stalled/collided 70S ribosomes which it binds and splits by an ATP-hydrolysis driven conformational change. Acts upstream of the ribosome quality control system (RQC), a ribosome-associated complex that mediates the extraction of incompletely synthesized nascent chains from stalled ribosomes and their subsequent degradation. Probably generates substrates for RQC. In Listeria innocua serovar 6a (strain ATCC BAA-680 / CLIP 11262), this protein is Endonuclease MutS2.